The sequence spans 460 residues: Probable asparagine--tRNA ligase, mitochondrial (460 aa).

It belongs to the class-II aminoacyl-tRNA synthetase family.

It localises to the mitochondrion matrix. The enzyme catalyses tRNA(Asn) + L-asparagine + ATP = L-asparaginyl-tRNA(Asn) + AMP + diphosphate + H(+). This chain is Probable asparagine--tRNA ligase, mitochondrial (asnS2), found in Dictyostelium discoideum (Social amoeba).